The sequence spans 573 residues: Urease subunit alpha (573 aa).

Residues 136-573 (GAIDCHVHLI…LPMAQRYFLF (438 aa)) form the Urease domain. 3 residues coordinate Ni(2+): H141, H143, and K224. N6-carboxylysine is present on K224. Residue H226 coordinates substrate. Ni(2+) is bound by residues H253 and H279. Catalysis depends on H327, which acts as the Proton donor. D367 contacts Ni(2+).

This sequence belongs to the metallo-dependent hydrolases superfamily. Urease alpha subunit family. In terms of assembly, heterotrimer of UreA (gamma), UreB (beta) and UreC (alpha) subunits. Three heterotrimers associate to form the active enzyme. Requires Ni cation as cofactor. Post-translationally, carboxylation allows a single lysine to coordinate two nickel ions.

It localises to the cytoplasm. It carries out the reaction urea + 2 H2O + H(+) = hydrogencarbonate + 2 NH4(+). Its pathway is nitrogen metabolism; urea degradation; CO(2) and NH(3) from urea (urease route): step 1/1. The polypeptide is Urease subunit alpha (Mycolicibacterium vanbaalenii (strain DSM 7251 / JCM 13017 / BCRC 16820 / KCTC 9966 / NRRL B-24157 / PYR-1) (Mycobacterium vanbaalenii)).